A 36-amino-acid polypeptide reads, in one-letter code: Kappa-theraphotoxin-Aa1a (36 aa).

Disulfide bonds link cysteine 3-cysteine 18, cysteine 10-cysteine 23, and cysteine 17-cysteine 30. Isoleucine 36 is modified (isoleucine amide).

Belongs to the neurotoxin 10 (Hwtx-1) family. In terms of tissue distribution, expressed by the venom gland.

The protein resides in the secreted. Selective inhibitor of voltage-gated potassium channel Kv10.1/KCNH1/EAG1 (IC(50)=637 nM). It acts by shifting the voltage dependence of channel activation in a depolarising direction. It shows a 100% inhibition at saturating concentrations, shows fast on-rates and is reversible. It also slightly affects channel inactivation, when the membrane is highly depolarised (&gt;+80 mV). The polypeptide is Kappa-theraphotoxin-Aa1a (Avicularia aurantiaca (Yellow-banded pinktoe tarantula)).